Consider the following 425-residue polypeptide: Serine--tRNA ligase (425 aa).

233 to 235 (TAE) provides a ligand contact to L-serine. 264–266 (RRE) contacts ATP. E287 lines the L-serine pocket. 351-354 (EISS) is an ATP binding site. S385 lines the L-serine pocket.

The protein belongs to the class-II aminoacyl-tRNA synthetase family. Type-1 seryl-tRNA synthetase subfamily. Homodimer. The tRNA molecule binds across the dimer.

It localises to the cytoplasm. It carries out the reaction tRNA(Ser) + L-serine + ATP = L-seryl-tRNA(Ser) + AMP + diphosphate + H(+). The catalysed reaction is tRNA(Sec) + L-serine + ATP = L-seryl-tRNA(Sec) + AMP + diphosphate + H(+). It functions in the pathway aminoacyl-tRNA biosynthesis; selenocysteinyl-tRNA(Sec) biosynthesis; L-seryl-tRNA(Sec) from L-serine and tRNA(Sec): step 1/1. Catalyzes the attachment of serine to tRNA(Ser). Is also able to aminoacylate tRNA(Sec) with serine, to form the misacylated tRNA L-seryl-tRNA(Sec), which will be further converted into selenocysteinyl-tRNA(Sec). In Synechococcus sp. (strain CC9605), this protein is Serine--tRNA ligase.